The chain runs to 285 residues: Bifunctional protein FolD (285 aa).

NADP(+)-binding positions include 165–167 (GRS) and S190.

Belongs to the tetrahydrofolate dehydrogenase/cyclohydrolase family. Homodimer.

The enzyme catalyses (6R)-5,10-methylene-5,6,7,8-tetrahydrofolate + NADP(+) = (6R)-5,10-methenyltetrahydrofolate + NADPH. It carries out the reaction (6R)-5,10-methenyltetrahydrofolate + H2O = (6R)-10-formyltetrahydrofolate + H(+). Its pathway is one-carbon metabolism; tetrahydrofolate interconversion. Functionally, catalyzes the oxidation of 5,10-methylenetetrahydrofolate to 5,10-methenyltetrahydrofolate and then the hydrolysis of 5,10-methenyltetrahydrofolate to 10-formyltetrahydrofolate. The protein is Bifunctional protein FolD of Burkholderia mallei (strain NCTC 10247).